The primary structure comprises 288 residues: MYFTRDPVIETVITSREGYKLSIRNSKHLSQDPFVVEAIEVVRLGETSFFRNCDHSKPFLLPASDYEVMEIRDAKINLKAVGLDRGVKIVGSREALLKMPKVAPIVSVSEDNTIVSEEEVVADSTVAAPASTPVAPMSKKERRKEFKNEKWKDKKKQGRRRNSKEIADAVGSSQEMIDTVAEECLQESSSEEGDFSERRFSLIPPPTRLISDGPEEPEEESQPVTSVDLNESLNALVSESCNVIESILADEDTVVFTKEKDQTAEESQEQPSLSLEETLVHDRISSEE.

The span at 126–136 (VAAPASTPVAP) shows a compositional bias: low complexity. 2 disordered regions span residues 126 to 227 (VAAP…VTSV) and 258 to 288 (KEKD…SSEE). The span at 143 to 152 (RKEFKNEKWK) shows a compositional bias: basic and acidic residues. The segment covering 153 to 162 (DKKKQGRRRN) has biased composition (basic residues). Residues 180 to 194 (VAEECLQESSSEEGD) are compositionally biased toward acidic residues. A compositionally biased stretch (basic and acidic residues) spans 278-288 (TLVHDRISSEE).

Belongs to the chlamydial CPn_0623/CT_504/TC_0791 family.

This is an uncharacterized protein from Chlamydia trachomatis serovar D (strain ATCC VR-885 / DSM 19411 / UW-3/Cx).